We begin with the raw amino-acid sequence, 1438 residues long: DNA polymerase III PolC-type (1438 aa).

Residues 422–578 (YVVFDVETTG…YDTEATAYMF (157 aa)) form the Exonuclease domain.

This sequence belongs to the DNA polymerase type-C family. PolC subfamily.

The protein resides in the cytoplasm. The enzyme catalyses DNA(n) + a 2'-deoxyribonucleoside 5'-triphosphate = DNA(n+1) + diphosphate. Required for replicative DNA synthesis. This DNA polymerase also exhibits 3' to 5' exonuclease activity. In Staphylococcus saprophyticus subsp. saprophyticus (strain ATCC 15305 / DSM 20229 / NCIMB 8711 / NCTC 7292 / S-41), this protein is DNA polymerase III PolC-type.